We begin with the raw amino-acid sequence, 463 residues long: uncharacterized protein (463 aa).

Transmembrane regions (helical) follow at residues 21-40 (DFAC…FFYT), 50-72 (AGTM…GTIV), 84-104 (PYLL…FTTP), 112-132 (LIYA…INVP), 156-176 (LFAN…AAYL), 186-206 (GWQL…IFCF), 237-257 (LVVL…SNSV), 271-291 (LVKW…PFIP), 311-331 (IIGL…ILVC), 334-354 (IAAA…PETI), 367-387 (GLIY…GGVV), and 408-428 (LMGI…LALI).

Belongs to the sodium:galactoside symporter (TC 2.A.2) family.

It is found in the cell membrane. This is an uncharacterized protein from Bacillus subtilis (strain 168).